The chain runs to 1069 residues: MSPIAIDTAPFQRARVNLLHPEDPKAVKSIVQLLQFNAEHNPDHVFCLQLPSKQDDAIGNPIRITHLQFYRAVSYCTQRLQEEIDGLHGPRVNEDGTVTKCSPVVLFMESNVGLLIHLLALMSLGVPVAVLSARLSPTAVQHLMSSIRAQSVIASPRLKGTIEEAIASDNNTPAIGVRMYTQRPFEDDLENSRTLDLPATNEESHFISENDRNVLILHSSGTTGLPKPIYQPHRYLLNYSECHELGPDDALGTVLSALPLFHGFGLVAPCLAMTVGKPFMLPPSNTIPTGSLIIELIQSFQPTALMTVPHILEEITTLPPEQSISALQPLEFVLCGGGPLKISVAEALAASGVNLLAHFGTTETGPLGVVFVPTPDYDWHYWKLRQDINYRLDEVDANSADGNQYKLTVHPFGWDSAFEIQDILLSRGAEYKHHLRAVGRKDDLIVLANGEKLVPRVLETLLMQDERVKSAVAFGEGKFEIGVIVEPTHKVSDEEDFKAALWAIVLEAGAQMDSHAQVSSPSSIILATPEKPVPRSDKGSILRRETYRVYDEEISRVYEVLDRASEETTALNLQSDSLEEDLKDLIQREIGWKISPSEWLQDSDLFELGMNSLQAIRLHRLLLSSLPVDSRERVGADFVYRSPSVSKLGASLRHLAANENGHRNDPETEIDELICLNSFIARQDATVLLTGSTGNLGSNLLAHLTTLPRVKKVICLNRRGSDTSTAHTDLVERQLAIAKSKGVVIDPESASKIEVIPCDPSADFFGLPAEVYTHLTAQTTHILHNAWPMDFKRNVASFQSQFQYLNNLLRVAHDTRLCRPSIKPRFLFVSSIAVVGQYPRTHGTRLIPEVPSDKSSIIEDFGYGKAKYVCEEIMRAAADRYPEMQLGIVRVGQMSGSSRTGYWNPKEHFPTLIKFASMVGQLPAIKQTLSWIAVDNAATVLSDILFAPSLSGIYHLENPIRQAWQDVLDIFASSLYINTVNVPFDQWLRNVQAAVQELGTEDERMEYDLLAEFLEKDFQRMATGKVILDTSRSRAVSETLREVGEISEEVVWKYVREWRRAGTLRAPLE.

Residues 20–391 are adenylation (A) domain; it reads HPEDPKAVKS…WKLRQDINYR (372 aa). Residues His262, 357 to 358, Thr362, and 437 to 440 contribute to the AMP site; these read AH and AVGR. Residues 576 to 656 enclose the Carrier domain; the sequence is DSLEEDLKDL…KLGASLRHLA (81 aa). Ser612 carries the post-translational modification O-(pantetheine 4'-phosphoryl)serine. The segment at 686–1032 is reductase (R) domain; sequence TVLLTGSTGN…TGKVILDTSR (347 aa). NADP(+) is bound by residues 693–696, Arg719, 785–787, Tyr863, and Lys867; these read TGNL and NAW.

Belongs to the adenylate-forming reductase family.

The enzyme catalyses 5-methylorsellinate + ATP + NADPH + H(+) = 2,4-dihydroxy 5,6-dimethylbenzaldehyde + AMP + diphosphate + NADP(+). The protein operates within secondary metabolite biosynthesis. Its function is as follows. Non-canonical non-ribosomal peptide synthetase; part of the cluster A that mediates the biosynthesis of azasperpyranones, members of the azaphilone family that exhibit anti-cancer activities. Azasperpyranones are synthesized by 2 clusters, A and B. Cluster A is responsible for the production of the polyhydric phenol moiety while the azaphilonoid scaffold is produced by the cluster B. The non-reducing polyketide synthase ATEG_03629 produces 5-methyl orsellinic acid, which is then reduced to 5-methyl orsellinic aldehyde by the NRPS-like protein ATEG_03630. 5-methyl orsellinic aldehyde is then first hydroxylated by the FAD-dependent monooxygenase ATEG_03635 and subsequently hydroxylated by the cytochrome P450 monooxygenase ATEG_03631 to produce the unstable polyhydric phenol precursor of azasperpyranones. On the other hand, the polyketide synthase ATEG_07659 is responsible for producing the 3,5-dimethyloctadienone moiety from acetyl-CoA, three malonyl-CoA, and two S-adenosyl methionines (SAM). The 3,5-dimethyloctadienone moiety is then loaded onto the SAT domain of ATEG_07661 and extended with four malonyl-CoA and one SAM, which leads to the formation of 2,4-dihydroxy-6-(5,7-dimethyl-2-oxo-trans-3-trans-5-nonadienyl)-3-methylbenzaldehyde (compound 8) after reductive release and aldol condensation. The FAD-dependent monooxygenase ATEG_07662 is the next enzyme in the biosynthesis sequence and hydroxylates the side chain at the benzylic position of compound 8. In Aspergillus nidulans, afoF, the ortholog of the FAD-dependent oxygenase ATEG_07660, is the key enzyme for the biosynthesis of asperfuranone by catalyzing the hydroxylation at C-8 of to prevent the formation of a six-membered ring hemiacetal intermediate and thus facilitating the formation of a five-membered ring to produce asperfuranone. In Aspergillus terreus, ATEG_07660 is probably not functional, which leads to the formation of the six-membered ring hemiacetal intermediate presperpyranone instead of asperfuranone. Finally, ATEG_03636 is involved in the condensation of the polyhydric phenol moiety produced by cluster A and the perasperpyranone precursor produced by cluster B, to yield azasperpyranone A. Further modifications of azasperpyranone A result in the production of derivatives, including azasperpyranone B to F. This chain is Adenylate-forming reductase, found in Aspergillus terreus (strain NIH 2624 / FGSC A1156).